Here is a 427-residue protein sequence, read N- to C-terminus: Large ribosomal subunit protein uL4 (427 aa).

Position 2 is an N-acetylalanine (Ala-2). Residue Lys-14 is modified to N6-acetyllysine. Arg-97 is modified (omega-N-methylarginine). Position 106 is an N6-acetyllysine (Lys-106). A Glycyl lysine isopeptide (Lys-Gly) (interchain with G-Cter in SUMO2) cross-link involves residue Lys-239. N6-acetyllysine is present on Lys-259. The residue at position 266 (Thr-266) is a Phosphothreonine. Ser-290 and Ser-295 each carry phosphoserine. Position 300 is a citrulline (Arg-300). A Glycyl lysine isopeptide (Lys-Gly) (interchain with G-Cter in SUMO2) cross-link involves residue Lys-327. Lys-333 and Lys-353 each carry N6-acetyllysine. Lys-364 is subject to N6-acetyllysine; alternate. Residue Lys-364 forms a Glycyl lysine isopeptide (Lys-Gly) (interchain with G-Cter in SUMO1); alternate linkage. Residue Ser-365 is modified to Phosphoserine. The segment at 369-427 (AAVAGKKPVVGKKGKKVAVGVKKQKKPLVGKKAAATKKPAPEKKSTEKKPTTEEKKPAA) is disordered. Residues 377–397 (VVGKKGKKVAVGVKKQKKPLV) show a composition bias toward basic residues. Positions 407–427 (PAPEKKSTEKKPTTEEKKPAA) are enriched in basic and acidic residues.

It belongs to the universal ribosomal protein uL4 family. As to quaternary structure, component of the large ribosomal subunit. May bind IPO9 with low affinity. Interacts with RBM3. Citrullinated by PADI4.

Its subcellular location is the cytoplasm. Its function is as follows. Component of the large ribosomal subunit. The ribosome is a large ribonucleoprotein complex responsible for the synthesis of proteins in the cell. In Macaca fascicularis (Crab-eating macaque), this protein is Large ribosomal subunit protein uL4 (RPL4).